We begin with the raw amino-acid sequence, 208 residues long: Small ribosomal subunit protein uS4 (208 aa).

In terms of domain architecture, S4 RNA-binding spans 98-163 (QRLDNVVYRM…NPQITRAIEL (66 aa)).

It belongs to the universal ribosomal protein uS4 family. In terms of assembly, part of the 30S ribosomal subunit. Contacts protein S5. The interaction surface between S4 and S5 is involved in control of translational fidelity.

One of the primary rRNA binding proteins, it binds directly to 16S rRNA where it nucleates assembly of the body of the 30S subunit. Functionally, with S5 and S12 plays an important role in translational accuracy. The sequence is that of Small ribosomal subunit protein uS4 from Campylobacter jejuni (strain RM1221).